A 309-amino-acid chain; its full sequence is Homoserine kinase (309 aa).

95–105 is a binding site for ATP; it reads PQSRGLGSSAA.

The protein belongs to the GHMP kinase family. Homoserine kinase subfamily.

The protein resides in the cytoplasm. It catalyses the reaction L-homoserine + ATP = O-phospho-L-homoserine + ADP + H(+). It functions in the pathway amino-acid biosynthesis; L-threonine biosynthesis; L-threonine from L-aspartate: step 4/5. Catalyzes the ATP-dependent phosphorylation of L-homoserine to L-homoserine phosphate. This Corynebacterium efficiens (strain DSM 44549 / YS-314 / AJ 12310 / JCM 11189 / NBRC 100395) protein is Homoserine kinase.